Here is a 452-residue protein sequence, read N- to C-terminus: FAD transporter (452 aa).

The next 12 helical transmembrane spans lie at 21–41, 49–69, 96–116, 131–151, 167–187, 199–219, 248–270, 283–303, 324–344, 357–377, 392–412, and 417–437; these read LPNLIGIMTILGFSLADTFFI, LAAISFTFPVTLIISSIAIGV, ALLLTFILIASLSALGSIFIE, LIHDYMMYWYVGAPLLVLLMV, MIMTLAAIINLILDPLLIFGI, AIATLFSWLVALSLSGYLLII, AALMNLINPLANAVIMAMLAHID, LESVLLIVVMALSSSLMPFIA, FILVFQTLLYIPLAFFAQPLA, LSFYILVLPCAYGPLGIVIIF, VINLCRLVLLMLPLAALGSYI, and GLLLALPITNLLMGIACYYLA.

It belongs to the multi antimicrobial extrusion (MATE) (TC 2.A.66.1) family.

Its subcellular location is the cell inner membrane. Its function is as follows. Flavin adenine dinucleotide (FAD) transporter that facilitates export of flavin electron shuttles. This chain is FAD transporter, found in Shewanella oneidensis (strain ATCC 700550 / JCM 31522 / CIP 106686 / LMG 19005 / NCIMB 14063 / MR-1).